A 301-amino-acid chain; its full sequence is Phosphatidylserine decarboxylase proenzyme (301 aa).

Catalysis depends on charge relay system; for autoendoproteolytic cleavage activity residues Asp-117, His-173, and Ser-260. The active-site Schiff-base intermediate with substrate; via pyruvic acid; for decarboxylase activity is the Ser-260. At Ser-260 the chain carries Pyruvic acid (Ser); by autocatalysis.

The protein belongs to the phosphatidylserine decarboxylase family. PSD-B subfamily. Prokaryotic type II sub-subfamily. Heterodimer of a large membrane-associated beta subunit and a small pyruvoyl-containing alpha subunit. Pyruvate serves as cofactor. Is synthesized initially as an inactive proenzyme. Formation of the active enzyme involves a self-maturation process in which the active site pyruvoyl group is generated from an internal serine residue via an autocatalytic post-translational modification. Two non-identical subunits are generated from the proenzyme in this reaction, and the pyruvate is formed at the N-terminus of the alpha chain, which is derived from the carboxyl end of the proenzyme. The autoendoproteolytic cleavage occurs by a canonical serine protease mechanism, in which the side chain hydroxyl group of the serine supplies its oxygen atom to form the C-terminus of the beta chain, while the remainder of the serine residue undergoes an oxidative deamination to produce ammonia and the pyruvoyl prosthetic group on the alpha chain. During this reaction, the Ser that is part of the protease active site of the proenzyme becomes the pyruvoyl prosthetic group, which constitutes an essential element of the active site of the mature decarboxylase.

It is found in the cell membrane. It carries out the reaction a 1,2-diacyl-sn-glycero-3-phospho-L-serine + H(+) = a 1,2-diacyl-sn-glycero-3-phosphoethanolamine + CO2. It participates in phospholipid metabolism; phosphatidylethanolamine biosynthesis; phosphatidylethanolamine from CDP-diacylglycerol: step 2/2. Catalyzes the formation of phosphatidylethanolamine (PtdEtn) from phosphatidylserine (PtdSer). This chain is Phosphatidylserine decarboxylase proenzyme, found in Chlamydia muridarum (strain MoPn / Nigg).